Here is a 124-residue protein sequence, read N- to C-terminus: Alpha-amylase inhibitor 0.19 (124 aa).

5 cysteine pairs are disulfide-bonded: C6–C52, C20–C41, C28–C83, C42–C99, and C54–C115.

The protein belongs to the protease inhibitor I6 (cereal trypsin/alpha-amylase inhibitor) family. In terms of assembly, homodimer. The disulfide bonds are essential for the inhibitor activity. In terms of tissue distribution, endosperm.

It is found in the secreted. In terms of biological role, alpha-amylase inhibitor. This is Alpha-amylase inhibitor 0.19 from Triticum aestivum (Wheat).